The sequence spans 224 residues: Phosphoglycolate phosphatase (224 aa).

Catalysis depends on aspartate 11, which acts as the Nucleophile. Mg(2+) is bound by residues aspartate 11, aspartate 13, and aspartate 177.

This sequence belongs to the HAD-like hydrolase superfamily. CbbY/CbbZ/Gph/YieH family. Requires Mg(2+) as cofactor.

The catalysed reaction is 2-phosphoglycolate + H2O = glycolate + phosphate. Its pathway is organic acid metabolism; glycolate biosynthesis; glycolate from 2-phosphoglycolate: step 1/1. Its function is as follows. Specifically catalyzes the dephosphorylation of 2-phosphoglycolate. Is involved in the dissimilation of the intracellular 2-phosphoglycolate formed during the DNA repair of 3'-phosphoglycolate ends, a major class of DNA lesions induced by oxidative stress. In Haemophilus influenzae (strain ATCC 51907 / DSM 11121 / KW20 / Rd), this protein is Phosphoglycolate phosphatase.